We begin with the raw amino-acid sequence, 102 residues long: Carboxysome shell protein CsoS1C (102 aa).

A BMC domain is found at 8-93; it reads ALGMIETRGL…PHKEVEPVLA (86 aa).

The protein belongs to the bacterial microcompartments protein family. CsoS1 subfamily. In terms of assembly, homohexamer with a small central pore.

It localises to the carboxysome. One of shell proteins of the carboxysome, a polyhedral inclusion where RuBisCO (ribulose bisphosphate carboxylase, ccbL-ccbS) is sequestered. Assembles into hexamers which make sheets that form the facets of the polyhedral carboxysome. The shell probably limits the diffusion of CO(2) into and out of the carboxysome. This Hydrogenovibrio crunogenus (strain DSM 25203 / XCL-2) (Thiomicrospira crunogena) protein is Carboxysome shell protein CsoS1C.